The primary structure comprises 804 residues: Protein SEY1 homolog 1 (804 aa).

Residues methionine 1–histidine 638 lie on the Cytoplasmic side of the membrane. The region spanning glycine 28 to serine 245 is the GB1/RHD3-type G domain. Residue glycine 38–serine 45 participates in GTP binding. A helical transmembrane segment spans residues isoleucine 639–leucine 659. The Lumenal portion of the chain corresponds to serine 660–proline 662. A helical transmembrane segment spans residues leucine 663 to leucine 683. Over tryptophan 684–valine 804 the chain is Cytoplasmic. Residues proline 706–valine 804 form a disordered region. The segment covering glutamine 751 to glycine 791 has biased composition (polar residues). Positions glutamine 792–valine 804 are enriched in basic residues.

Belongs to the TRAFAC class dynamin-like GTPase superfamily. GB1/RHD3 GTPase family. RHD3 subfamily.

The protein localises to the endoplasmic reticulum membrane. Probable GTP-binding protein that may be involved in cell development. This chain is Protein SEY1 homolog 1, found in Trichomonas vaginalis (strain ATCC PRA-98 / G3).